Reading from the N-terminus, the 252-residue chain is Fructose-1,6-bisphosphatase/inositol-1-monophosphatase (252 aa).

Residues glutamate 65, aspartate 81, isoleucine 83, and aspartate 84 each coordinate Mg(2+). Substrate contacts are provided by residues 84 to 86, arginine 170, phenylalanine 175, and arginine 194; that span reads DGS. Aspartate 201 lines the Mg(2+) pocket.

This sequence belongs to the inositol monophosphatase superfamily. FBPase class 4 family. Homodimer. Requires Mg(2+) as cofactor.

It catalyses the reaction beta-D-fructose 1,6-bisphosphate + H2O = beta-D-fructose 6-phosphate + phosphate. The enzyme catalyses a myo-inositol phosphate + H2O = myo-inositol + phosphate. With respect to regulation, IMPase activity is inhibited by Ca(2+) and Zn(2+). In contrast to mammalian I-1-P phosphatases, is not inhibited by Li(+) up to 100 mM. Functionally, phosphatase with broad specificity; it can dephosphorylate fructose 1,6-bisphosphate, both D and L isomers of inositol-1-phosphate (I-1-P), 2'-AMP, pNPP, beta-glycerol phosphate, and alpha-D-glucose-1-phosphate. Cannot hydrolyze glucose-6-phosphate, fructose-6-phosphate, NAD(+) or 5'-AMP. May be involved in the biosynthesis of a unique osmolyte, di-myo-inositol 1,1-phosphate. In Methanocaldococcus jannaschii (strain ATCC 43067 / DSM 2661 / JAL-1 / JCM 10045 / NBRC 100440) (Methanococcus jannaschii), this protein is Fructose-1,6-bisphosphatase/inositol-1-monophosphatase (suhB).